Reading from the N-terminus, the 667-residue chain is Protein-glutamine gamma-glutamyltransferase 4 (667 aa).

N-linked (GlcNAc...) asparagine glycans are attached at residues Asn-151, Asn-220, and Asn-227. Residues Cys-256, His-315, and Asp-338 contribute to the active site. Positions 378 and 380 each coordinate Ca(2+). N-linked (GlcNAc...) asparagine glycosylation occurs at Asn-408. Ca(2+) contacts are provided by Glu-430 and Glu-435. A disordered region spans residues Glu-430–Asp-449. N-linked (GlcNAc...) asparagine glycans are attached at residues Asn-472 and Asn-488.

It belongs to the transglutaminase superfamily. Transglutaminase family. As to quaternary structure, homodimer. Ca(2+) is required as a cofactor. In terms of processing, the N-terminus is blocked. Probably linked to the cell membrane via a lipid-anchor, possibly a GPI-anchor. Post-translationally, N-glycosylated on 2 Asn residues by a high mannose oligosaccharide consisting of five mannose residues and a fucosylated biantennary complex glycan. As to expression, expressed in the coagulating gland, the dorsal part of the prostate and in semen (at protein level). Expressed at low levels in the lateral prostate and seminal vesicle. Not expressed in the epididymis, kidney, liver, serum, sperm plug, testes and ventral prostate.

The protein resides in the secreted. It localises to the cell membrane. The catalysed reaction is L-glutaminyl-[protein] + L-lysyl-[protein] = [protein]-L-lysyl-N(6)-5-L-glutamyl-[protein] + NH4(+). In terms of biological role, associated with the mammalian reproductive process. Plays an important role in the formation of the seminal coagulum through the cross-linking of specific proteins present in the seminal plasma. Transglutaminase is also required to stabilize the copulatory plug. This is Protein-glutamine gamma-glutamyltransferase 4 (Tgm4) from Rattus norvegicus (Rat).